The sequence spans 713 residues: U3 small nucleolar RNA-associated protein 8 (713 aa).

The residue at position 95 (Thr95) is a Phosphothreonine. Ser148 and Ser150 each carry phosphoserine.

Interacts with snoRNA U3. Interacts with MPP10 and UTP25. Component of the ribosomal small subunit (SSU) processome composed of at least 40 protein subunits and snoRNA U3. In the absence of snoRNA3, forms a complex with other t-UTPs. This complex can associate with pre-18S ribosomal RNAs.

It localises to the nucleus. Its subcellular location is the nucleolus. Its function is as follows. Involved in nucleolar processing of pre-18S ribosomal RNA. Also has a role in nuclear tRNA export. It acts between the steps of tRNA maturation/aminoacylation and its subsequent translocation out of the nucleus. Required for optimal pre-ribosomal RNA transcription by RNA polymerase I together with a subset of U3 proteins required for transcription (t-UTPs). This chain is U3 small nucleolar RNA-associated protein 8 (UTP8), found in Saccharomyces cerevisiae (strain ATCC 204508 / S288c) (Baker's yeast).